A 572-amino-acid chain; its full sequence is Glutathione hydrolase 1 (572 aa).

The N-terminal stretch at 1–22 (MSLVRTVTIVLFIIAFLQNAAA) is a signal peptide. Arginine 99 serves as a coordination point for L-glutamate. N-linked (GlcNAc...) asparagine glycans are attached at residues asparagine 171 and asparagine 222. Threonine 368 functions as the Nucleophile in the catalytic mechanism. Residues threonine 386, asparagine 388, glutamate 407, aspartate 410, 440-441 (SS), and 461-462 (GG) contribute to the L-glutamate site. A glycan (N-linked (GlcNAc...) asparagine) is linked at asparagine 505. The interval 552–572 (GGRSELVAVSDPRKGGFPSGY) is disordered.

Belongs to the gamma-glutamyltransferase family. Expressed in embryo, roots and leaves. In mature plants, expression is restricted to vascular tissues of roots, leaves, flowers and siliques.

It is found in the secreted. It localises to the extracellular space. Its subcellular location is the apoplast. It catalyses the reaction an N-terminal (5-L-glutamyl)-[peptide] + an alpha-amino acid = 5-L-glutamyl amino acid + an N-terminal L-alpha-aminoacyl-[peptide]. The catalysed reaction is glutathione + H2O = L-cysteinylglycine + L-glutamate. It carries out the reaction an S-substituted glutathione + H2O = an S-substituted L-cysteinylglycine + L-glutamate. It functions in the pathway sulfur metabolism; glutathione metabolism. May play a role in preventing oxidative stress by metabolizing extracellular oxidized glutathione (GSSG). This is Glutathione hydrolase 1 (GGT1) from Arabidopsis thaliana (Mouse-ear cress).